The following is a 574-amino-acid chain: Interactor of HORMAD1 protein 1 (574 aa).

Residues 113 to 133 (GLSKQFEEKKRRATDQSDSET) are disordered. Residues 117-127 (QFEEKKRRATD) show a composition bias toward basic and acidic residues. The stretch at 217 to 240 (MEMKSTLKNLEVLVVEQTKNLQQF) forms a coiled coil. Disordered regions lie at residues 267–324 (GHLK…GVWD), 372–393 (FSNLPSQRAGNGQGLMAQGASQ), and 426–457 (TEQKGRPCRKRRRGKKQQPQRSKRGGLLDRKQ). Low complexity predominate over residues 272 to 284 (STSQTSPSLTQSL). Residues 372–381 (FSNLPSQRAG) are compositionally biased toward polar residues. Basic residues predominate over residues 431 to 449 (RPCRKRRRGKKQQPQRSKR). A phosphoserine mark is found at Ser-476, Ser-569, and Ser-570.

As to quaternary structure, part of the MCD recombinosome complex, at least composed of IHO1, REC114 and MEI4. Interacts with REC114. Interacts with MEI4. Interacts with HORMAD1. Interacts with ANKRD31. As to expression, detected in spermatocytes and testis (at protein level).

It localises to the chromosome. In terms of biological role, required for DNA double-strand breaks (DSBs) formation in unsynapsed regions during meiotic recombination. Probably acts by forming a complex with MEI4 and REC114, which activates DSBs formation in unsynapsed regions, an essential step to ensure completion of synapsis. Not required for HORMAD1 functions in pairing-independent synaptonemal complex formation, ATR recruitment to unsynapsed axes, meiotic silencing of unsynapsed chromatin (MSUC) or meiotic surveillance. The chain is Interactor of HORMAD1 protein 1 from Mus musculus (Mouse).